The sequence spans 376 residues: GTPase Obg (376 aa).

Positions Met1–Ile158 constitute an Obg domain. Residues Ala159–Lys359 form the OBG-type G domain. GTP-binding positions include Gly165 to Ser172, Phe190 to Thr194, Asp212 to Gly215, Thr280 to Asp283, and Ser340 to Ala342. Mg(2+)-binding residues include Ser172 and Thr192.

It belongs to the TRAFAC class OBG-HflX-like GTPase superfamily. OBG GTPase family. As to quaternary structure, monomer. Mg(2+) serves as cofactor.

The protein localises to the cytoplasm. Its function is as follows. An essential GTPase which binds GTP, GDP and possibly (p)ppGpp with moderate affinity, with high nucleotide exchange rates and a fairly low GTP hydrolysis rate. Plays a role in control of the cell cycle, stress response, ribosome biogenesis and in those bacteria that undergo differentiation, in morphogenesis control. The polypeptide is GTPase Obg (Campylobacter curvus (strain 525.92)).